Reading from the N-terminus, the 379-residue chain is Anhydro-N-acetylmuramic acid kinase (379 aa).

9-16 (GTSADGVD) lines the ATP pocket.

This sequence belongs to the anhydro-N-acetylmuramic acid kinase family.

It carries out the reaction 1,6-anhydro-N-acetyl-beta-muramate + ATP + H2O = N-acetyl-D-muramate 6-phosphate + ADP + H(+). Its pathway is amino-sugar metabolism; 1,6-anhydro-N-acetylmuramate degradation. It participates in cell wall biogenesis; peptidoglycan recycling. In terms of biological role, catalyzes the specific phosphorylation of 1,6-anhydro-N-acetylmuramic acid (anhMurNAc) with the simultaneous cleavage of the 1,6-anhydro ring, generating MurNAc-6-P. Is required for the utilization of anhMurNAc either imported from the medium or derived from its own cell wall murein, and thus plays a role in cell wall recycling. This chain is Anhydro-N-acetylmuramic acid kinase, found in Parasynechococcus marenigrum (strain WH8102).